Here is a 362-residue protein sequence, read N- to C-terminus: Heme A synthase (362 aa).

A run of 5 helical transmembrane segments spans residues 15-35, 104-124, 129-149, 161-181, and 200-220; these read VRIWLTLVAMLIAVMVLVGGA, VIGIAYLLPLLWFLWRGAIAP, ALWAIFALGALQGAVGWWMVA, VRLAIHLTLALVIYAAIVWTL, and AIALLALTLVQLFLGALVAGL. Heme is bound at residue His-264. Transmembrane regions (helical) follow at residues 266–285, 293–313, and 316–336; these read MMAYALWALAAWHAIDALRA, GALWLFAALSLQAVLGILTLL, and VPIGLALAHQAVGIVVLTLAV. Position 324 (His-324) interacts with heme.

Belongs to the COX15/CtaA family. Type 2 subfamily. As to quaternary structure, interacts with CtaB. It depends on heme b as a cofactor.

It localises to the cell membrane. It carries out the reaction Fe(II)-heme o + 2 A + H2O = Fe(II)-heme a + 2 AH2. The protein operates within porphyrin-containing compound metabolism; heme A biosynthesis; heme A from heme O: step 1/1. In terms of biological role, catalyzes the conversion of heme O to heme A by two successive hydroxylations of the methyl group at C8. The first hydroxylation forms heme I, the second hydroxylation results in an unstable dihydroxymethyl group, which spontaneously dehydrates, resulting in the formyl group of heme A. This chain is Heme A synthase, found in Rhodopseudomonas palustris (strain BisB5).